Reading from the N-terminus, the 257-residue chain is 1-(5-phosphoribosyl)-5-[(5-phosphoribosylamino)methylideneamino] imidazole-4-carboxamide isomerase (257 aa).

The Proton acceptor role is filled by Asp-8. Asp-129 serves as the catalytic Proton donor.

Belongs to the HisA/HisF family.

It localises to the cytoplasm. It carries out the reaction 1-(5-phospho-beta-D-ribosyl)-5-[(5-phospho-beta-D-ribosylamino)methylideneamino]imidazole-4-carboxamide = 5-[(5-phospho-1-deoxy-D-ribulos-1-ylimino)methylamino]-1-(5-phospho-beta-D-ribosyl)imidazole-4-carboxamide. The protein operates within amino-acid biosynthesis; L-histidine biosynthesis; L-histidine from 5-phospho-alpha-D-ribose 1-diphosphate: step 4/9. The sequence is that of 1-(5-phosphoribosyl)-5-[(5-phosphoribosylamino)methylideneamino] imidazole-4-carboxamide isomerase from Trichormus variabilis (strain ATCC 29413 / PCC 7937) (Anabaena variabilis).